Consider the following 469-residue polypeptide: ATP synthase subunit beta (469 aa).

153 to 160 (GGAGVGKT) contacts ATP.

The protein belongs to the ATPase alpha/beta chains family. In terms of assembly, F-type ATPases have 2 components, CF(1) - the catalytic core - and CF(0) - the membrane proton channel. CF(1) has five subunits: alpha(3), beta(3), gamma(1), delta(1), epsilon(1). CF(0) has three main subunits: a(1), b(2) and c(9-12). The alpha and beta chains form an alternating ring which encloses part of the gamma chain. CF(1) is attached to CF(0) by a central stalk formed by the gamma and epsilon chains, while a peripheral stalk is formed by the delta and b chains.

It is found in the cell inner membrane. It carries out the reaction ATP + H2O + 4 H(+)(in) = ADP + phosphate + 5 H(+)(out). Functionally, produces ATP from ADP in the presence of a proton gradient across the membrane. The catalytic sites are hosted primarily by the beta subunits. In Pseudothermotoga lettingae (strain ATCC BAA-301 / DSM 14385 / NBRC 107922 / TMO) (Thermotoga lettingae), this protein is ATP synthase subunit beta.